The sequence spans 247 residues: MSKLFWAMLSFITRLPVPRRWSQGLDFEHYSRGIITFPLIGLLLGAISGLVFMVLQAWCGAPLAALFSVLVLVLMTGGFHLDGLADTCDGVFSARSRDRMLEIMRDSRLGTHGGLALIFVVLAKILVLSELALRGESILASLAAACAVSRGTAALLMYRHRYAREEGLGNVFIGKIDGRQTCVTLGLAAIFAAVLLPGMHGVAAMVVTMVAIFILGQLLKRTLGGQTGDTLGAAIELGELVFLLALL.

5 consecutive transmembrane segments (helical) span residues 34-54 (IITF…VFMV), 59-79 (CGAP…TGGF), 113-133 (GGLA…ELAL), 138-158 (ILAS…LLMY), and 194-214 (VLLP…AIFI).

The protein belongs to the CobS family. The cofactor is Mg(2+).

Its subcellular location is the cell inner membrane. The catalysed reaction is alpha-ribazole + adenosylcob(III)inamide-GDP = adenosylcob(III)alamin + GMP + H(+). It carries out the reaction alpha-ribazole 5'-phosphate + adenosylcob(III)inamide-GDP = adenosylcob(III)alamin 5'-phosphate + GMP + H(+). It functions in the pathway cofactor biosynthesis; adenosylcobalamin biosynthesis; adenosylcobalamin from cob(II)yrinate a,c-diamide: step 7/7. In terms of biological role, joins adenosylcobinamide-GDP and alpha-ribazole to generate adenosylcobalamin (Ado-cobalamin). Also synthesizes adenosylcobalamin 5'-phosphate from adenosylcobinamide-GDP and alpha-ribazole 5'-phosphate. This Escherichia coli O81 (strain ED1a) protein is Adenosylcobinamide-GDP ribazoletransferase.